Reading from the N-terminus, the 432-residue chain is uncharacterized protein (432 aa).

The segment covering 1–18 (MAIGDKRKKNRKNKQNKK) has biased composition (basic residues). Disordered regions lie at residues 1 to 23 (MAIG…KNDN), 37 to 56 (NSNS…NGNG), and 122 to 168 (STNS…GSSL). 3 stretches are compositionally biased toward low complexity: residues 37–53 (NSNS…NNKN), 122–147 (STNS…QQQQ), and 154–168 (ESQS…GSSL). The stretch at 181–226 (LNDQLKIVQLEQKIVNLEKEIQRMRNEQNQIHKQNLNQYHELLKQI) forms a coiled coil. Disordered regions lie at residues 270 to 290 (VQPV…KSNG) and 310 to 432 (SSKF…STLR). Over residues 274–288 (STPSSSSNSLASKKS) the composition is skewed to low complexity. Polar residues predominate over residues 311 to 324 (SKFAQSNSSPSRVN). The span at 352–378 (KKSATTTTTSSSSNNATTTTAKGSTST) shows a compositional bias: low complexity. Over residues 383–414 (ITNSNNIKNSVLSPKSITKPNTPSNIIFSPLS) the composition is skewed to polar residues.

This is an uncharacterized protein from Dictyostelium discoideum (Social amoeba).